The sequence spans 248 residues: Probable succinyl-CoA:3-ketoacid coenzyme A transferase subunit A (248 aa).

24–30 serves as a coordination point for CoA; the sequence is GGFGLCG.

It belongs to the 3-oxoacid CoA-transferase subunit A family. In terms of assembly, heterodimer of a subunit A and a subunit B.

The catalysed reaction is a 3-oxo acid + succinyl-CoA = a 3-oxoacyl-CoA + succinate. The protein is Probable succinyl-CoA:3-ketoacid coenzyme A transferase subunit A (scoA) of Mycobacterium bovis (strain ATCC BAA-935 / AF2122/97).